The primary structure comprises 129 residues: Small ribosomal subunit protein uS11 (129 aa).

Belongs to the universal ribosomal protein uS11 family. As to quaternary structure, part of the 30S ribosomal subunit. Interacts with proteins S7 and S18. Binds to IF-3.

Its function is as follows. Located on the platform of the 30S subunit, it bridges several disparate RNA helices of the 16S rRNA. Forms part of the Shine-Dalgarno cleft in the 70S ribosome. The sequence is that of Small ribosomal subunit protein uS11 from Actinobacillus succinogenes (strain ATCC 55618 / DSM 22257 / CCUG 43843 / 130Z).